The following is a 178-amino-acid chain: Nucleolar protein 16 (178 aa).

The interval 1 to 31 (MPKAKGKTRRQKFGYSVNRKRLNRNARRKAA) is disordered. Threonine 8 is modified (phosphothreonine). Serine 16 bears the Phosphoserine mark. Lysine 74 is covalently cross-linked (Glycyl lysine isopeptide (Lys-Gly) (interchain with G-Cter in SUMO2)). Lysine 90 is subject to N6-acetyllysine. A Phosphothreonine modification is found at threonine 144. Residues phenylalanine 166, leucine 167, lysine 172, and arginine 173 each participate in a glycyl lysine isopeptide (Lys-Gly) (interchain with G-Cter in SUMO2) cross-link.

It belongs to the NOP16 family.

The protein localises to the nucleus. Its subcellular location is the nucleolus. The chain is Nucleolar protein 16 (NOP16) from Homo sapiens (Human).